The chain runs to 686 residues: DNA ligase (686 aa).

Residues 31–35, 80–81, and glutamate 109 each bind NAD(+); these read DSEYD and SL. Catalysis depends on lysine 111, which acts as the N6-AMP-lysine intermediate. NAD(+) contacts are provided by arginine 132, glutamate 166, lysine 280, and lysine 304. Zn(2+) is bound by residues cysteine 430, cysteine 433, cysteine 448, and cysteine 453. One can recognise a BRCT domain in the interval 611–686; the sequence is NVEGILSGKT…IWSEQDLLDL (76 aa).

This sequence belongs to the NAD-dependent DNA ligase family. LigA subfamily. It depends on Mg(2+) as a cofactor. The cofactor is Mn(2+).

The enzyme catalyses NAD(+) + (deoxyribonucleotide)n-3'-hydroxyl + 5'-phospho-(deoxyribonucleotide)m = (deoxyribonucleotide)n+m + AMP + beta-nicotinamide D-nucleotide.. In terms of biological role, DNA ligase that catalyzes the formation of phosphodiester linkages between 5'-phosphoryl and 3'-hydroxyl groups in double-stranded DNA using NAD as a coenzyme and as the energy source for the reaction. It is essential for DNA replication and repair of damaged DNA. This is DNA ligase from Lactococcus lactis subsp. cremoris (strain SK11).